Here is a 352-residue protein sequence, read N- to C-terminus: Protein MGF 360-16R (352 aa).

It belongs to the asfivirus MGF 360 family.

Plays a role in virus cell tropism, and may be required for efficient virus replication in macrophages. This African swine fever virus (isolate Warthog/Namibia/Wart80/1980) (ASFV) protein is Protein MGF 360-16R.